We begin with the raw amino-acid sequence, 299 residues long: Tetrahydromethanopterin S-methyltransferase subunit E (299 aa).

The next 6 helical transmembrane spans lie at 57 to 77, 80 to 100, 133 to 153, 158 to 178, 237 to 257, and 261 to 281; these read AISG…SVAW, INAG…AAIV, IGPI…AAYL, LGNP…VGAI, GLCF…GNII, and LVTK…AAMI.

It belongs to the MtrE family. In terms of assembly, the complex is composed of 8 subunits; MtrA, MtrB, MtrC, MtrD, MtrE, MtrF, MtrG and MtrH.

Its subcellular location is the cell membrane. It catalyses the reaction 5-methyl-5,6,7,8-tetrahydromethanopterin + coenzyme M + 2 Na(+)(in) = 5,6,7,8-tetrahydromethanopterin + methyl-coenzyme M + 2 Na(+)(out). Its pathway is one-carbon metabolism; methanogenesis from CO(2); methyl-coenzyme M from 5,10-methylene-5,6,7,8-tetrahydromethanopterin: step 2/2. Functionally, part of a complex that catalyzes the formation of methyl-coenzyme M and tetrahydromethanopterin from coenzyme M and methyl-tetrahydromethanopterin. This is an energy-conserving, sodium-ion translocating step. The sequence is that of Tetrahydromethanopterin S-methyltransferase subunit E from Methanococcus vannielii (strain ATCC 35089 / DSM 1224 / JCM 13029 / OCM 148 / SB).